A 302-amino-acid chain; its full sequence is MRTEGDSWDITTSVGSTALFVATARALEAQKSDPLVVDPYAEAFCRAVGGSWADVLDGKLPDHKLKSTDFGEHFVNFQGARTKYFDEYFRRAAAAGARQVVILAAGLDSRAYRLPWPDGTTVFELDRPQVLDFKREVLASHGAQPRALRREIAVDLRDDWPQALRDSGFDAAAPSAWIAEGLLIYLPATAQERLFTGIDALAGRRSHVAVEDGAPMGPDEYAAKVEEERAAIAEGAEEHPFFQLVYNERCAPAAEWFGERGWTAVATLLNDYLEAVGRPVPGPESEAGPMFARNTLVSAARV.

S-adenosyl-L-methionine-binding positions include aspartate 126 and 155–156 (DL).

Belongs to the UPF0677 family.

Exhibits S-adenosyl-L-methionine-dependent methyltransferase activity. This Mycobacterium tuberculosis (strain ATCC 25177 / H37Ra) protein is Putative S-adenosyl-L-methionine-dependent methyltransferase MRA_0290.